We begin with the raw amino-acid sequence, 220 residues long: uncharacterized protein (220 aa).

Positions 194-220 are disordered; it reads DQSQQQATKSNSKTKKLKGNHGEKTKI. Residues 195–204 are compositionally biased toward polar residues; that stretch reads QSQQQATKSN.

This is an uncharacterized protein from Borreliella burgdorferi (strain ATCC 35210 / DSM 4680 / CIP 102532 / B31) (Borrelia burgdorferi).